Here is a 251-residue protein sequence, read N- to C-terminus: tRNA (guanine-N(1)-)-methyltransferase (251 aa).

S-adenosyl-L-methionine-binding positions include Gly-113 and 133 to 138 (MGDYVL).

This sequence belongs to the RNA methyltransferase TrmD family. In terms of assembly, homodimer.

The protein resides in the cytoplasm. The enzyme catalyses guanosine(37) in tRNA + S-adenosyl-L-methionine = N(1)-methylguanosine(37) in tRNA + S-adenosyl-L-homocysteine + H(+). Functionally, specifically methylates guanosine-37 in various tRNAs. The polypeptide is tRNA (guanine-N(1)-)-methyltransferase (Sodalis glossinidius (strain morsitans)).